Here is a 361-residue protein sequence, read N- to C-terminus: DNA replication and repair protein RecF (361 aa).

30–37 (GPNGSGKT) serves as a coordination point for ATP.

Belongs to the RecF family.

It localises to the cytoplasm. In terms of biological role, the RecF protein is involved in DNA metabolism; it is required for DNA replication and normal SOS inducibility. RecF binds preferentially to single-stranded, linear DNA. It also seems to bind ATP. In Yersinia enterocolitica serotype O:8 / biotype 1B (strain NCTC 13174 / 8081), this protein is DNA replication and repair protein RecF.